We begin with the raw amino-acid sequence, 223 residues long: Killer cell lectin-like receptor subfamily B member 1B allele B (223 aa).

Residues 1–43 (MDSTTLVYADLNLARIQEPKHDSPPSLSPDTCRCPRWHRLALK) lie on the Cytoplasmic side of the membrane. An ITIM motif motif is present at residues 6-11 (LVYADL). The LCK-binding motif motif lies at 32–35 (CRCP). The helical; Signal-anchor for type II membrane protein transmembrane segment at 44–64 (FGCAGLILLVLVVIGLCVLVL) threads the bilayer. Topologically, residues 65-223 (SVQKSSVQKI…LNHETPCNDS (159 aa)) are extracellular. The 111-residue stretch at 101-211 (HRDKCFHVSQ…CSSDNRWICQ (111 aa)) folds into the C-type lectin domain. 2 cysteine pairs are disulfide-bonded: Cys122-Cys210 and Cys189-Cys202.

Homodimer; disulfide-linked. Interacts with tyrosine kinase LCK. Binds PTPN6/SHP-1 in a phosphorylation-dependent manner. As to expression, expressed in NK cells and a subset of T-cells.

The protein localises to the membrane. Functionally, receptor for CLEC2D/OCIL. Ligand-binding contributes to inhibition of cytotoxic natural killer (NK) cells. May mediate MHC class I-independent 'missing-self' recognition of allografts, tumor cells and virus-infected cells. In Mus musculus (Mouse), this protein is Killer cell lectin-like receptor subfamily B member 1B allele B (Klrb1b).